We begin with the raw amino-acid sequence, 458 residues long: Fumarate hydratase class II 2 (458 aa).

Substrate-binding positions include serine 98–threonine 100, asparagine 123–aspartate 126, serine 133–asparagine 135, and threonine 181. The active-site Proton donor/acceptor is histidine 182. Residue serine 312 is part of the active site. Substrate is bound by residues serine 313 and lysine 318 to asparagine 320.

This sequence belongs to the class-II fumarase/aspartase family. Fumarase subfamily. Homotetramer.

It localises to the cytoplasm. It catalyses the reaction (S)-malate = fumarate + H2O. Its pathway is carbohydrate metabolism; tricarboxylic acid cycle; (S)-malate from fumarate: step 1/1. Its function is as follows. Involved in the TCA cycle. Catalyzes the stereospecific interconversion of fumarate to L-malate. The polypeptide is Fumarate hydratase class II 2 (Pseudomonas aeruginosa (strain ATCC 15692 / DSM 22644 / CIP 104116 / JCM 14847 / LMG 12228 / 1C / PRS 101 / PAO1)).